Here is a 299-residue protein sequence, read N- to C-terminus: tRNA dimethylallyltransferase (299 aa).

Residue 22–29 coordinates ATP; sequence GPTASGKT. Residue 24-29 participates in substrate binding; that stretch reads TASGKT. Interaction with substrate tRNA regions lie at residues 47–50 and 172–176; these read DSRQ and QRLLR.

Belongs to the IPP transferase family. In terms of assembly, monomer. Mg(2+) is required as a cofactor.

It carries out the reaction adenosine(37) in tRNA + dimethylallyl diphosphate = N(6)-dimethylallyladenosine(37) in tRNA + diphosphate. In terms of biological role, catalyzes the transfer of a dimethylallyl group onto the adenine at position 37 in tRNAs that read codons beginning with uridine, leading to the formation of N6-(dimethylallyl)adenosine (i(6)A). The polypeptide is tRNA dimethylallyltransferase (Endomicrobium trichonymphae).